The following is a 164-amino-acid chain: UPF0114 protein YqhA (164 aa).

The next 3 helical transmembrane spans lie at 15–35 (LLAPVYFGLSLALVALALKFF), 53–73 (LILVLLSLVDMTLVGGLLVMV), and 136–156 (LMWYVIIHLTFVLSAFVMGYL).

It belongs to the UPF0114 family.

It localises to the cell membrane. The chain is UPF0114 protein YqhA from Escherichia coli O139:H28 (strain E24377A / ETEC).